The sequence spans 421 residues: Serine hydroxymethyltransferase (421 aa).

(6S)-5,6,7,8-tetrahydrofolate-binding positions include L121 and 125 to 127; that span reads GHL. Position 229 is an N6-(pyridoxal phosphate)lysine (K229).

This sequence belongs to the SHMT family. As to quaternary structure, homodimer. The cofactor is pyridoxal 5'-phosphate.

It localises to the cytoplasm. The catalysed reaction is (6R)-5,10-methylene-5,6,7,8-tetrahydrofolate + glycine + H2O = (6S)-5,6,7,8-tetrahydrofolate + L-serine. The protein operates within one-carbon metabolism; tetrahydrofolate interconversion. It functions in the pathway amino-acid biosynthesis; glycine biosynthesis; glycine from L-serine: step 1/1. Its function is as follows. Catalyzes the reversible interconversion of serine and glycine with tetrahydrofolate (THF) serving as the one-carbon carrier. This reaction serves as the major source of one-carbon groups required for the biosynthesis of purines, thymidylate, methionine, and other important biomolecules. Also exhibits THF-independent aldolase activity toward beta-hydroxyamino acids, producing glycine and aldehydes, via a retro-aldol mechanism. This is Serine hydroxymethyltransferase from Actinobacillus pleuropneumoniae serotype 5b (strain L20).